Here is a 152-residue protein sequence, read N- to C-terminus: Large ribosomal subunit protein uL13 (152 aa).

The tract at residues His130–Ser152 is disordered.

Belongs to the universal ribosomal protein uL13 family. Part of the 50S ribosomal subunit.

This protein is one of the early assembly proteins of the 50S ribosomal subunit, although it is not seen to bind rRNA by itself. It is important during the early stages of 50S assembly. The protein is Large ribosomal subunit protein uL13 of Dinoroseobacter shibae (strain DSM 16493 / NCIMB 14021 / DFL 12).